The sequence spans 621 residues: Lamin-C (621 aa).

Residues 1 to 47 form a disordered region; that stretch reads MSARRVTLNTRVSRASTSTPVGGASTSSRVGATSPTSPTRTSRQQEK. The tract at residues 1-47 is head; sequence MSARRVTLNTRVSRASTSTPVGGASTSSRVGATSPTSPTRTSRQQEK. A compositionally biased stretch (polar residues) spans 7–31; it reads TLNTRVSRASTSTPVGGASTSSRVG. The segment covering 33 to 42 has biased composition (low complexity); it reads TSPTSPTRTS. The residue at position 34 (S34) is a Phosphoserine. Residues 46 to 402 form the IF rod domain; the sequence is EKEELQHLND…KLLCGEERRL (357 aa). Positions 47–85 are coil 1A; sequence KEELQHLNDRLACYIDRMRNLENENSRLTQELNLAQDTV. The linker 1 stretch occupies residues 86–95; the sequence is NRETSNLKAV. The tract at residues 96-233 is coil 1B; that stretch reads YEKELAAARK…QVHTQELTET (138 aa). Residues 234–257 form a linker 2 region; that stretch reads RSRRQIEISEIDGRLSRQYEAKLQ. Residues 258-403 are coil 2; sequence QSLQELRDQY…LLCGEERRLN (146 aa). Residues 404-458 form a disordered region; the sequence is IESPGRPTTDSGISSNGSHLTASASSRSGRVTPSGRRSATPGISGSSAVKRRRTV. Residues 404 to 621 are tail; it reads IESPGRPTTD…GVRSLFSLLF (218 aa). A phosphoserine mark is found at S406 and S441. The span at 409–450 shows a compositional bias: polar residues; that stretch reads RPTTDSGISSNGSHLTASASSRSGRVTPSGRRSATPGISGSS. T443 carries the post-translational modification Phosphothreonine. The Nuclear localization signal signature appears at 453–458; that stretch reads KRRRTV. One can recognise an LTD domain in the interval 468–582; that stretch reads SEYSVNAAAK…EDVASYDRVR (115 aa). The disordered stretch occupies residues 585–605; it reads VSSHTSRHRSSGTPSTGFTLG.

The protein belongs to the intermediate filament family. In terms of assembly, interacts with MAN1. As to expression, first detected from late stage 12 in the oenocytes, abdominal segments, hindgut and posterior spiracles, with expression increasing in stage 13 (at protein level). In stage 14, also becomes detectable in the foregut (at protein level). Stage 15 shows expression in the epidermis, dorsal longitudinal trunk, pharynx, esophagus and proventriculus, with the dorsal pharyngeal musculature showing expression in late stage 15 (at protein level). In stage 16 embryos, also detected in the exit glia with increasing expression in the somatic musculature (at protein level). Also detected in the visceral mesoderm but not in the midgut or central nervous system until the end of embryogenesis (at protein level). In third instar larvae, detectable at varying levels in all cell types (at protein level). Expressed in spermatocytes (at protein level).

Its subcellular location is the nucleus. The protein localises to the nucleus lamina. Lamins are components of the nuclear lamina, a fibrous layer on the nucleoplasmic side of the inner nuclear membrane, which is thought to provide a framework for the nuclear envelope and may also interact with chromatin. In spermatocytes, regulates cytokinesis during meiosis. This Drosophila melanogaster (Fruit fly) protein is Lamin-C (LamC).